We begin with the raw amino-acid sequence, 5400 residues long: Midasin (5400 aa).

AAA-ATPase protomer stretches follow at residues 345 to 571 (MVSL…HGLP), 656 to 986 (LLEK…AIKA), 1050 to 1308 (SYVK…EKVV), 1347 to 1652 (SMRR…VNMA), 1769 to 2023 (VLRV…VLRI), and 2074 to 2347 (IRQN…MMGP). ATP is bound by residues 360-367 (GPSGSGKS), 674-681 (GETGTGKT), 1079-1086 (GPTSSGKT), 1369-1376 (GDTGGGKT), 1786-1793 (GSPGVGKT), and 2095-2102 (GPSSSGKT). The tract at residues 2435 to 4569 (IYLSSLGVTD…DGVGAKDVSD (2135 aa)) is linker. Coiled-coil stretches lie at residues 2896–2916 (LERLKLEKKRLEDKMGFSEID), 3233–3253 (AMKITCKLLKLEEKISSLELN), and 3896–3916 (MEQLDLNRKNVETELKEVLKL). 3 disordered regions span residues 4540-4890 (EEDD…SSSN), 4905-4929 (TLTDNLPKMEFPQNQSSTAQQTKVN), and 4990-5069 (QVNT…RMDS). Basic and acidic residues predominate over residues 4576–4612 (QLHGTDKKEEEEKEQDDVLGKNKGIEMSDEFDGKEYS). Acidic residues predominate over residues 4613 to 4631 (VSEDEEEDKEDEGSEDEPL). 2 stretches are compositionally biased toward basic and acidic residues: residues 4641-4652 (DAEKADEKPWNK) and 4661-4687 (MNEKNESGPSIVDKDTRSRELRAKDDG). Acidic residues-rich tracts occupy residues 4688 to 4698 (VETADEPEESN) and 4706 to 4721 (GNDENVEQDDFDDTDN). The segment covering 4722–4732 (LEEKIQTKEEA) has biased composition (basic and acidic residues). The span at 4740–4750 (VDNEQIDDDME) shows a compositional bias: acidic residues. The segment covering 4751–4762 (MDKTEEVEKEDA) has biased composition (basic and acidic residues). A compositionally biased stretch (acidic residues) spans 4779 to 4798 (GENDQEETQEPSEENMEAEA). Basic and acidic residues predominate over residues 4799 to 4810 (EDRCGSPQKEEP). Over residues 4811–4822 (GNDLEQEPETEP) the composition is skewed to acidic residues. Basic and acidic residues predominate over residues 4823-4834 (IEGKEVMSEDMM). Composition is skewed to polar residues over residues 4839–4855 (RNDNISGVESGSQNPHG), 4864–4874 (TAPQENLSATD), 4916–4928 (PQNQSSTAQQTKV), and 5030–5040 (SKPSISNSIAE). The short motif at 5157 to 5164 (MKKVIPYI) is the Nuclear localization signal element. In terms of domain architecture, VWFA spans 5186–5387 (QVVIAVDDSR…EALPRTLGDV (202 aa)). A coiled-coil region spans residues 5271–5291 (VVNLLRNMNEMLENLASTRRQ).

It belongs to the midasin family. As to quaternary structure, associates with pre-60S ribosomes in the nucleoplasm. As to expression, constitutively and ubiquitously expressed. Mostly observed in the shoot apex and root tip, and, to a lower extent, in mature seeds, seedling (excluding the hypocotyl), roots, stems, leaves and flowers.

It is found in the nucleus. The protein localises to the nucleolus. It localises to the nucleoplasm. Nuclear chaperone required for maturation and nuclear export of pre-60S ribosome subunits. Functions at successive maturation steps to remove ribosomal factors at critical transition points, first driving the exit of early pre-60S particles from the nucleolus and then driving late pre-60S particles from the nucleus. Required for female gametophyte development. Involved in the expression regulation of genes related to plant growth and development. The sequence is that of Midasin from Arabidopsis thaliana (Mouse-ear cress).